Here is a 593-residue protein sequence, read N- to C-terminus: Scarecrow-like protein 1 (593 aa).

2 disordered regions span residues 29-61 (NPKLYTLNENGNNNGVSSAQIFDPDRSKNPCLT) and 188-216 (YQNESEQHQDSPKESSSADSNSHVSSKEV). Polar residues predominate over residues 35 to 48 (LNENGNNNGVSSAQ). Residues 202 to 211 (SSSADSNSHV) are compositionally biased toward low complexity. Positions 213 to 593 (SKEVVSQATP…KSLIVASAWR (381 aa)) constitute a GRAS domain. The leucine repeat I (LRI) stretch occupies residues 220-280 (ATPKQILISC…AARMAASGKF (61 aa)). Residues 299–364 (MQVLFEVCPC…GKRPRLRLTG (66 aa)) form a VHIID region. The short motif at 330-334 (VHIID) is the VHIID element. The segment at 380–411 (IIGLRLEQLAEDNGVSFKFKAMPSKTSIVSPS) is leucine repeat II (LRII). Positions 421 to 515 (LIVNFAFQLH…RQCLARDIVN (95 aa)) are PFYRE. An SAW region spans residues 518-593 (ACEGEERIER…KSLIVASAWR (76 aa)).

Belongs to the GRAS family. As to expression, expressed in seedlings, roots, shoots, leaves, flowers and siliques.

It is found in the nucleus. Functionally, probable transcription factor involved in plant development. This Arabidopsis thaliana (Mouse-ear cress) protein is Scarecrow-like protein 1 (SCL1).